Reading from the N-terminus, the 285-residue chain is 2-oxoglutarate synthase subunit KorB (285 aa).

As to quaternary structure, heterotetramer of the KorA, KorB, KorC and KorD subunits.

The catalysed reaction is 2 oxidized [2Fe-2S]-[ferredoxin] + 2-oxoglutarate + CoA = succinyl-CoA + 2 reduced [2Fe-2S]-[ferredoxin] + CO2 + H(+). This chain is 2-oxoglutarate synthase subunit KorB (korB), found in Methanothermobacter marburgensis (strain ATCC BAA-927 / DSM 2133 / JCM 14651 / NBRC 100331 / OCM 82 / Marburg) (Methanobacterium thermoautotrophicum).